Here is a 342-residue protein sequence, read N- to C-terminus: MAEMFYDDDADLSTITGKKVAVLGFGSQGHAHALSLRDSGVDVVVGLKEGSKSRAKAEEQGLTVLTPFEASKAADVIMVLVPDHLQRGLYAEAIEPNLTAGKALFFSHGFNIRFGYIKPPADVDVVMVAPKGPGHLVRREYVDGRGVPVIVAVEQDATGQAWALALAYAKAIGGLRAGGIKTTFTEETETDLFGEQAVLCGGASALVQTGFEVLTEAGYQPEVAYFECLHELKLIVDLMYEGGIAKQRWSVSDTAEWGDYVSGPRVIDASVKERMKDVLKDIQDGTFARNFIEDQDAGAPKFKELRAKAEQHPIEATGRELRKLMAWVKSDDSDYVEGSAAR.

Residues 2-182 (AEMFYDDDAD…GGLRAGGIKT (181 aa)) enclose the KARI N-terminal Rossmann domain. Residues 25 to 28 (FGSQ), K48, S51, S53, and 83 to 86 (DHLQ) contribute to the NADP(+) site. H108 is a catalytic residue. G134 lines the NADP(+) pocket. Positions 183–328 (TFTEETETDL…RELRKLMAWV (146 aa)) constitute a KARI C-terminal knotted domain. D191, E195, E227, and E231 together coordinate Mg(2+). S252 is a substrate binding site.

Belongs to the ketol-acid reductoisomerase family. Mg(2+) is required as a cofactor.

It catalyses the reaction (2R)-2,3-dihydroxy-3-methylbutanoate + NADP(+) = (2S)-2-acetolactate + NADPH + H(+). The catalysed reaction is (2R,3R)-2,3-dihydroxy-3-methylpentanoate + NADP(+) = (S)-2-ethyl-2-hydroxy-3-oxobutanoate + NADPH + H(+). It participates in amino-acid biosynthesis; L-isoleucine biosynthesis; L-isoleucine from 2-oxobutanoate: step 2/4. The protein operates within amino-acid biosynthesis; L-valine biosynthesis; L-valine from pyruvate: step 2/4. Its function is as follows. Involved in the biosynthesis of branched-chain amino acids (BCAA). Catalyzes an alkyl-migration followed by a ketol-acid reduction of (S)-2-acetolactate (S2AL) to yield (R)-2,3-dihydroxy-isovalerate. In the isomerase reaction, S2AL is rearranged via a Mg-dependent methyl migration to produce 3-hydroxy-3-methyl-2-ketobutyrate (HMKB). In the reductase reaction, this 2-ketoacid undergoes a metal-dependent reduction by NADPH to yield (R)-2,3-dihydroxy-isovalerate. In Kineococcus radiotolerans (strain ATCC BAA-149 / DSM 14245 / SRS30216), this protein is Ketol-acid reductoisomerase (NADP(+)).